The sequence spans 661 residues: 1-deoxy-D-xylulose-5-phosphate synthase (661 aa).

Residues His-98 and 139–141 contribute to the thiamine diphosphate site; that span reads AHS. Asp-170 contacts Mg(2+). Thiamine diphosphate is bound by residues 171 to 172, Asn-199, Tyr-309, and Glu-391; that span reads GA. Residue Asn-199 participates in Mg(2+) binding.

Belongs to the transketolase family. DXPS subfamily. Homodimer. Mg(2+) serves as cofactor. It depends on thiamine diphosphate as a cofactor.

It catalyses the reaction D-glyceraldehyde 3-phosphate + pyruvate + H(+) = 1-deoxy-D-xylulose 5-phosphate + CO2. The protein operates within metabolic intermediate biosynthesis; 1-deoxy-D-xylulose 5-phosphate biosynthesis; 1-deoxy-D-xylulose 5-phosphate from D-glyceraldehyde 3-phosphate and pyruvate: step 1/1. Functionally, catalyzes the acyloin condensation reaction between C atoms 2 and 3 of pyruvate and glyceraldehyde 3-phosphate to yield 1-deoxy-D-xylulose-5-phosphate (DXP). This Bradyrhizobium diazoefficiens (strain JCM 10833 / BCRC 13528 / IAM 13628 / NBRC 14792 / USDA 110) protein is 1-deoxy-D-xylulose-5-phosphate synthase.